Here is a 169-residue protein sequence, read N- to C-terminus: Crossover junction endodeoxyribonuclease RuvC (169 aa).

Residues Asp11, Glu71, and Asp143 contribute to the active site. Mg(2+)-binding residues include Asp11, Glu71, and Asp143.

The protein belongs to the RuvC family. As to quaternary structure, homodimer which binds Holliday junction (HJ) DNA. The HJ becomes 2-fold symmetrical on binding to RuvC with unstacked arms; it has a different conformation from HJ DNA in complex with RuvA. In the full resolvosome a probable DNA-RuvA(4)-RuvB(12)-RuvC(2) complex forms which resolves the HJ. Requires Mg(2+) as cofactor.

It localises to the cytoplasm. The catalysed reaction is Endonucleolytic cleavage at a junction such as a reciprocal single-stranded crossover between two homologous DNA duplexes (Holliday junction).. In terms of biological role, the RuvA-RuvB-RuvC complex processes Holliday junction (HJ) DNA during genetic recombination and DNA repair. Endonuclease that resolves HJ intermediates. Cleaves cruciform DNA by making single-stranded nicks across the HJ at symmetrical positions within the homologous arms, yielding a 5'-phosphate and a 3'-hydroxyl group; requires a central core of homology in the junction. The consensus cleavage sequence is 5'-(A/T)TT(C/G)-3'. Cleavage occurs on the 3'-side of the TT dinucleotide at the point of strand exchange. HJ branch migration catalyzed by RuvA-RuvB allows RuvC to scan DNA until it finds its consensus sequence, where it cleaves and resolves the cruciform DNA. This Bartonella quintana (strain Toulouse) (Rochalimaea quintana) protein is Crossover junction endodeoxyribonuclease RuvC.